The chain runs to 320 residues: Polyprenal reductase 1 (320 aa).

A run of 6 helical transmembrane segments spans residues 5-25, 64-84, 143-163, 200-220, 243-263, and 266-286; these read IVWLVKAAWITVWIVSILPLV, FFGHFYVVGVVWTTLLLAATW, MHILAYVGALFYYVAAPLSLC, PLMKLGSLQWIGGAIFLWGWI, IIPYGDWFEMVSCPHFLAEIV, and LGLLISSGGTDISIWLLFGFV.

This sequence belongs to the steroid 5-alpha reductase family. Polyprenal reductase subfamily. In terms of tissue distribution, expressed in roots and flowers.

The protein resides in the cell membrane. It catalyses the reaction a di-trans,poly-cis-dolichal + NADP(+) = a di-trans,poly-cis-polyprenal + NADPH + H(+). It functions in the pathway protein modification; protein glycosylation. Its function is as follows. Plays a key role in early steps of protein N-linked glycosylation by being involved in the conversion of polyprenol into dolichol. Acts as a polyprenal reductase that mediates the reduction of polyprenal into dolichal in a NADP-dependent mechanism. Dolichols are required for the synthesis of dolichol-linked monosaccharides and the oligosaccharide precursor used for N-glycosylation. Involved in the regulation of plant growth and reproductive processes. In Arabidopsis thaliana (Mouse-ear cress), this protein is Polyprenal reductase 1.